The sequence spans 289 residues: Pantothenate synthetase (289 aa).

Residue 30–37 (MGYLHKGH) coordinates ATP. The active-site Proton donor is His-37. Gln-61 lines the (R)-pantoate pocket. Gln-61 contacts beta-alanine. Residue 147-150 (GEKD) participates in ATP binding. Residue Gln-153 coordinates (R)-pantoate. ATP-binding positions include Val-176 and 184–187 (CSSR).

It belongs to the pantothenate synthetase family. In terms of assembly, homodimer.

The protein localises to the cytoplasm. The enzyme catalyses (R)-pantoate + beta-alanine + ATP = (R)-pantothenate + AMP + diphosphate + H(+). It functions in the pathway cofactor biosynthesis; (R)-pantothenate biosynthesis; (R)-pantothenate from (R)-pantoate and beta-alanine: step 1/1. Its function is as follows. Catalyzes the condensation of pantoate with beta-alanine in an ATP-dependent reaction via a pantoyl-adenylate intermediate. The chain is Pantothenate synthetase from Brucella anthropi (strain ATCC 49188 / DSM 6882 / CCUG 24695 / JCM 21032 / LMG 3331 / NBRC 15819 / NCTC 12168 / Alc 37) (Ochrobactrum anthropi).